Here is a 1397-residue protein sequence, read N- to C-terminus: DNA-directed RNA polymerase subunit beta' (1397 aa).

4 residues coordinate Zn(2+): Cys75, Cys77, Cys90, and Cys93. Mg(2+) is bound by residues Asp465, Asp467, and Asp469. Cys819, Cys893, Cys900, and Cys903 together coordinate Zn(2+).

The protein belongs to the RNA polymerase beta' chain family. In terms of assembly, the RNAP catalytic core consists of 2 alpha, 1 beta, 1 beta' and 1 omega subunit. When a sigma factor is associated with the core the holoenzyme is formed, which can initiate transcription. Requires Mg(2+) as cofactor. Zn(2+) serves as cofactor.

It catalyses the reaction RNA(n) + a ribonucleoside 5'-triphosphate = RNA(n+1) + diphosphate. Its function is as follows. DNA-dependent RNA polymerase catalyzes the transcription of DNA into RNA using the four ribonucleoside triphosphates as substrates. The chain is DNA-directed RNA polymerase subunit beta' from Acinetobacter baylyi (strain ATCC 33305 / BD413 / ADP1).